The chain runs to 321 residues: Flagellin C (321 aa).

It belongs to the bacterial flagellin family.

Its subcellular location is the secreted. The protein localises to the bacterial flagellum. In terms of biological role, flagellin is the subunit protein which polymerizes to form the filaments of bacterial flagella. The polypeptide is Flagellin C (flaC) (Rhizobium meliloti (strain 1021) (Ensifer meliloti)).